A 397-amino-acid chain; its full sequence is Elongation factor Tu (397 aa).

The tr-type G domain occupies 10–206 (KPHVNIGTIG…AVDQNIPEPQ (197 aa)). Residues 19 to 26 (GHIDHGKT) form a G1 region. 19 to 26 (GHIDHGKT) provides a ligand contact to GTP. Thr-26 serves as a coordination point for Mg(2+). The interval 62–66 (GITIS) is G2. Positions 83-86 (DCPG) are G3. GTP contacts are provided by residues 83–87 (DCPGH) and 138–141 (NKSD). Positions 138–141 (NKSD) are G4. The G5 stretch occupies residues 176 to 178 (SAL).

It belongs to the TRAFAC class translation factor GTPase superfamily. Classic translation factor GTPase family. EF-Tu/EF-1A subfamily. As to quaternary structure, monomer.

The protein resides in the cytoplasm. The enzyme catalyses GTP + H2O = GDP + phosphate + H(+). In terms of biological role, GTP hydrolase that promotes the GTP-dependent binding of aminoacyl-tRNA to the A-site of ribosomes during protein biosynthesis. This Thermobifida fusca (strain YX) protein is Elongation factor Tu.